The following is a 547-amino-acid chain: MDPMELRNVNIEPDDESSSGESVPDSYIGIGNSEKAAMSSQFANEDAESQKFLTNGFLGKKKLADYGDEHHPGTTSFGMSSFNLSNAIMGSGILGLSYAMANTGIILFIIMLLAVAILSLYSVHLLLKTAKEGGSLIYEKLGEKAFGWPGKIGAFISITMQNIGAMSSYLFIIKYELPEVIRAFMGLEENTGEWYPNGNYLIVFVSLGIILPLSLLKNLGYLGYTSGFSLTCMVFFVSVVIYKKFQIPCPLPVLDHSVGNLSFNNTLSMHVVMLPNNSESSDVNFMMDYTHRNPAGLDENKAKGSLHDSGVEYEAHSDDKCQPKYFVFNSRTAYAIPILAFAFVCHPEVLPIYSELKDRSRRKMQTVSNISITGMLVMYLLAALFGYLTFYGEVEDELLHAYSKVYTFDIPLLMVRLAVLVAVTLTVPIVLFPIRTSVTTLLFPKRPFSWIRHFLIAAVLIALNNVLVILVPTIKYIFGFIGASSATMLIFILPAVFYLKLVKKESFRSPQKVGALIFLVVGIIFMIGSMALIIIDWIYDPPNSKHH.

The disordered stretch occupies residues 1–26; the sequence is MDPMELRNVNIEPDDESSSGESVPDS. Topologically, residues 1-104 are extracellular; it reads MDPMELRNVN…GLSYAMANTG (104 aa). Phosphoserine is present on Ser-49. A helical membrane pass occupies residues 105–125; the sequence is IILFIIMLLAVAILSLYSVHL. Residues 126 to 151 lie on the Cytoplasmic side of the membrane; sequence LLKTAKEGGSLIYEKLGEKAFGWPGK. Residues 152–172 form a helical membrane-spanning segment; the sequence is IGAFISITMQNIGAMSSYLFI. Over 173-195 the chain is Extracellular; that stretch reads IKYELPEVIRAFMGLEENTGEWY. A helical membrane pass occupies residues 196–216; sequence PNGNYLIVFVSLGIILPLSLL. Residues 217 to 220 are Cytoplasmic-facing; the sequence is KNLG. A helical membrane pass occupies residues 221 to 241; sequence YLGYTSGFSLTCMVFFVSVVI. Residues 242–332 are Extracellular-facing; sequence YKKFQIPCPL…PKYFVFNSRT (91 aa). A disulfide bridge links Cys-249 with Cys-321. N-linked (GlcNAc...) asparagine glycans are attached at residues Asn-260, Asn-264, and Asn-276. The helical transmembrane segment at 333-353 threads the bilayer; it reads AYAIPILAFAFVCHPEVLPIY. Residues 354–369 are Cytoplasmic-facing; sequence SELKDRSRRKMQTVSN. A helical transmembrane segment spans residues 370–390; it reads ISITGMLVMYLLAALFGYLTF. The Extracellular portion of the chain corresponds to 391–411; the sequence is YGEVEDELLHAYSKVYTFDIP. Residues 412–432 traverse the membrane as a helical segment; sequence LLMVRLAVLVAVTLTVPIVLF. Topologically, residues 433 to 453 are cytoplasmic; it reads PIRTSVTTLLFPKRPFSWIRH. The chain crosses the membrane as a helical span at residues 454-474; that stretch reads FLIAAVLIALNNVLVILVPTI. At 475–476 the chain is on the extracellular side; sequence KY. A helical transmembrane segment spans residues 477 to 497; the sequence is IFGFIGASSATMLIFILPAVF. Residues 498–514 are Cytoplasmic-facing; that stretch reads YLKLVKKESFRSPQKVG. The helical transmembrane segment at 515-535 threads the bilayer; it reads ALIFLVVGIIFMIGSMALIII. Topologically, residues 536–547 are extracellular; it reads DWIYDPPNSKHH.

This sequence belongs to the amino acid/polyamine transporter 2 family. The disulfide bond plays an important role in substrate transport, but has no effect on trafficking to the cell surface.

Its subcellular location is the cell membrane. It is found in the cell projection. The protein resides in the microvillus membrane. It carries out the reaction L-methionine(in) + Na(+)(in) = L-methionine(out) + Na(+)(out). The catalysed reaction is L-asparagine(in) + Na(+)(in) = L-asparagine(out) + Na(+)(out). It catalyses the reaction L-threonine(in) + Na(+)(in) = L-threonine(out) + Na(+)(out). The enzyme catalyses L-serine(in) + Na(+)(in) = L-serine(out) + Na(+)(out). It carries out the reaction glycine(in) + Na(+)(in) = glycine(out) + Na(+)(out). The catalysed reaction is L-alanine(in) + Na(+)(in) = L-alanine(out) + Na(+)(out). It catalyses the reaction L-glutamine(in) + Na(+)(in) = L-glutamine(out) + Na(+)(out). The enzyme catalyses L-histidine(in) + Na(+)(in) = L-histidine(out) + Na(+)(out). It carries out the reaction L-cysteine(in) + Na(+)(in) = L-cysteine(out) + Na(+)(out). The catalysed reaction is L-proline(in) + Na(+)(in) = L-proline(out) + Na(+)(out). Its function is as follows. Symporter that cotransports neutral amino acids and sodium ions from the extraccellular to the intracellular side of the cell membrane. The transport is electrogenic, pH dependent and partially tolerates substitution of Na(+) by Li(+). Preferentially transports smaller amino acids, such as glycine, L-alanine, L-serine, L-asparagine and L-threonine, followed by L-cysteine, L-histidine, L-proline and L-glutamine and L-methionine. The protein is Sodium-coupled neutral amino acid transporter 4 of Pongo abelii (Sumatran orangutan).